The following is a 353-amino-acid chain: UDP-N-acetylglucosamine--N-acetylmuramyl-(pentapeptide) pyrophosphoryl-undecaprenol N-acetylglucosamine transferase (353 aa).

Residues 14 to 16 (TGG), Asn-126, Arg-162, Ser-190, Ile-243, 262 to 267 (ALTVSE), and Gln-287 contribute to the UDP-N-acetyl-alpha-D-glucosamine site.

The protein belongs to the glycosyltransferase 28 family. MurG subfamily.

Its subcellular location is the cell inner membrane. The enzyme catalyses di-trans,octa-cis-undecaprenyl diphospho-N-acetyl-alpha-D-muramoyl-L-alanyl-D-glutamyl-meso-2,6-diaminopimeloyl-D-alanyl-D-alanine + UDP-N-acetyl-alpha-D-glucosamine = di-trans,octa-cis-undecaprenyl diphospho-[N-acetyl-alpha-D-glucosaminyl-(1-&gt;4)]-N-acetyl-alpha-D-muramoyl-L-alanyl-D-glutamyl-meso-2,6-diaminopimeloyl-D-alanyl-D-alanine + UDP + H(+). It functions in the pathway cell wall biogenesis; peptidoglycan biosynthesis. Functionally, cell wall formation. Catalyzes the transfer of a GlcNAc subunit on undecaprenyl-pyrophosphoryl-MurNAc-pentapeptide (lipid intermediate I) to form undecaprenyl-pyrophosphoryl-MurNAc-(pentapeptide)GlcNAc (lipid intermediate II). The protein is UDP-N-acetylglucosamine--N-acetylmuramyl-(pentapeptide) pyrophosphoryl-undecaprenol N-acetylglucosamine transferase of Vibrio atlanticus (strain LGP32) (Vibrio splendidus (strain Mel32)).